An 890-amino-acid chain; its full sequence is Wolframin (890 aa).

An N-acetylmethionine modification is found at Met-1. Positions 1-86 are disordered; the sequence is MDSNTAPLGP…TGPTKGDMEI (86 aa). The tract at residues 1 to 321 is interaction with ATP6V1A; it reads MDSNTAPLGP…MHWLSTIIPT (321 aa). Positions 10–20 are enriched in pro residues; the sequence is PSCPQPPPAPQ. Residue Thr-30 is modified to Phosphothreonine; by FAM20C. Residue Ser-32 is modified to Phosphoserine; by FAM20C. A Phosphoserine modification is found at Ser-157. The next 10 membrane-spanning stretches (helical) occupy residues 314 to 334, 340 to 360, 402 to 422, 427 to 447, 465 to 485, 496 to 516, 529 to 549, 563 to 583, 589 to 609, and 632 to 652; these read WLST…FIVS, FFAF…MVIC, LEPY…FPIA, IPCS…YLSL, AGLL…KVLG, LVVL…YLFF, CYLV…VILL, YFLF…VGVL, FTSL…VPLL, and MVKL…FYVY. The Lumenal segment spans residues 653 to 869; sequence RSEGMKVYNS…HVKIEHDWRS (217 aa). N-linked (GlcNAc...) asparagine glycans are attached at residues Asn-661 and Asn-746. Residues 870-890 traverse the membrane as a helical segment; it reads TVHGAVKFAFDFFFFPFLSAA.

Interacts with ATP6V1A. In terms of tissue distribution, highly expressed in heart followed by brain, placenta, lung and pancreas. Weakly expressed in liver, kidney and skeletal muscle. Also expressed in islet and beta-cell insulinoma cell line.

It localises to the endoplasmic reticulum membrane. Its subcellular location is the cytoplasmic vesicle. The protein localises to the secretory vesicle. In terms of biological role, participates in the regulation of cellular Ca(2+) homeostasis, at least partly, by modulating the filling state of the endoplasmic reticulum Ca(2+) store. Negatively regulates the ER stress response and positively regulates the stability of V-ATPase subunits ATP6V1A and ATP1B1 by preventing their degradation through an unknown proteasome-independent mechanism. The protein is Wolframin (WFS1) of Homo sapiens (Human).